Here is a 292-residue protein sequence, read N- to C-terminus: 4-hydroxy-tetrahydrodipicolinate synthase (292 aa).

Residue T45 participates in pyruvate binding. Y133 (proton donor/acceptor) is an active-site residue. K161 functions as the Schiff-base intermediate with substrate in the catalytic mechanism. I203 is a pyruvate binding site.

Belongs to the DapA family. Homotetramer; dimer of dimers.

The protein localises to the cytoplasm. It carries out the reaction L-aspartate 4-semialdehyde + pyruvate = (2S,4S)-4-hydroxy-2,3,4,5-tetrahydrodipicolinate + H2O + H(+). Its pathway is amino-acid biosynthesis; L-lysine biosynthesis via DAP pathway; (S)-tetrahydrodipicolinate from L-aspartate: step 3/4. Its function is as follows. Catalyzes the condensation of (S)-aspartate-beta-semialdehyde [(S)-ASA] and pyruvate to 4-hydroxy-tetrahydrodipicolinate (HTPA). This is 4-hydroxy-tetrahydrodipicolinate synthase from Shigella flexneri.